Reading from the N-terminus, the 189-residue chain is Orotate phosphoribosyltransferase (189 aa).

Residues R94, K95, K98, and 120–128 contribute to the 5-phospho-alpha-D-ribose 1-diphosphate site; that span reads EDVTTTGGS. 2 residues coordinate orotate: T124 and R152.

It belongs to the purine/pyrimidine phosphoribosyltransferase family. PyrE subfamily. Homodimer. The cofactor is Mg(2+).

It catalyses the reaction orotidine 5'-phosphate + diphosphate = orotate + 5-phospho-alpha-D-ribose 1-diphosphate. It functions in the pathway pyrimidine metabolism; UMP biosynthesis via de novo pathway; UMP from orotate: step 1/2. In terms of biological role, catalyzes the transfer of a ribosyl phosphate group from 5-phosphoribose 1-diphosphate to orotate, leading to the formation of orotidine monophosphate (OMP). This chain is Orotate phosphoribosyltransferase, found in Thermococcus gammatolerans (strain DSM 15229 / JCM 11827 / EJ3).